Here is a 234-residue protein sequence, read N- to C-terminus: Sugar fermentation stimulation protein homolog (234 aa).

The protein belongs to the SfsA family.

The chain is Sugar fermentation stimulation protein homolog from Shewanella sp. (strain MR-7).